Here is an 83-residue protein sequence, read N- to C-terminus: Small ribosomal subunit protein eS21 (83 aa).

Met-1 bears the N-acetylmethionine mark. A Glycyl lysine isopeptide (Lys-Gly) (interchain with G-Cter in SUMO2) cross-link involves residue Lys-41. Lys-81 is subject to N6-acetyllysine.

The protein belongs to the eukaryotic ribosomal protein eS21 family. Component of the 40S small ribosomal subunit.

It is found in the cytoplasm. It localises to the cytosol. Its subcellular location is the rough endoplasmic reticulum. Component of the small ribosomal subunit. The ribosome is a large ribonucleoprotein complex responsible for the synthesis of proteins in the cell. The polypeptide is Small ribosomal subunit protein eS21 (RPS21) (Sus scrofa (Pig)).